A 305-amino-acid polypeptide reads, in one-letter code: D-alanine--D-alanine ligase (305 aa).

Residues 107-299 (KKMLCYHGIA…FDELVERILA (193 aa)) enclose the ATP-grasp domain. 134–186 (PDYPLVVKPAREGSTIGISIVHDEQELAAGLEEAFRHDDLVLVEQFIAGAEVT) is an ATP binding site. 3 residues coordinate Mg(2+): Asp254, Glu266, and Asn268.

It belongs to the D-alanine--D-alanine ligase family. Mg(2+) is required as a cofactor. Requires Mn(2+) as cofactor.

The protein localises to the cytoplasm. It catalyses the reaction 2 D-alanine + ATP = D-alanyl-D-alanine + ADP + phosphate + H(+). The protein operates within cell wall biogenesis; peptidoglycan biosynthesis. Its function is as follows. Cell wall formation. This is D-alanine--D-alanine ligase from Syntrophotalea carbinolica (strain DSM 2380 / NBRC 103641 / GraBd1) (Pelobacter carbinolicus).